The sequence spans 466 residues: Asparagine--tRNA ligase (466 aa).

This sequence belongs to the class-II aminoacyl-tRNA synthetase family. As to quaternary structure, homodimer.

It localises to the cytoplasm. The catalysed reaction is tRNA(Asn) + L-asparagine + ATP = L-asparaginyl-tRNA(Asn) + AMP + diphosphate + H(+). The sequence is that of Asparagine--tRNA ligase from Shewanella halifaxensis (strain HAW-EB4).